Reading from the N-terminus, the 130-residue chain is Transcription antitermination protein NusB (130 aa).

This sequence belongs to the NusB family.

In terms of biological role, involved in transcription antitermination. Required for transcription of ribosomal RNA (rRNA) genes. Binds specifically to the boxA antiterminator sequence of the ribosomal RNA (rrn) operons. This is Transcription antitermination protein NusB from Bacillus anthracis (strain A0248).